The sequence spans 431 residues: Glutamate-1-semialdehyde 2,1-aminomutase (431 aa).

K267 bears the N6-(pyridoxal phosphate)lysine mark.

The protein belongs to the class-III pyridoxal-phosphate-dependent aminotransferase family. HemL subfamily. As to quaternary structure, homodimer. Pyridoxal 5'-phosphate is required as a cofactor.

The protein resides in the cytoplasm. The catalysed reaction is (S)-4-amino-5-oxopentanoate = 5-aminolevulinate. It participates in porphyrin-containing compound metabolism; protoporphyrin-IX biosynthesis; 5-aminolevulinate from L-glutamyl-tRNA(Glu): step 2/2. The polypeptide is Glutamate-1-semialdehyde 2,1-aminomutase (Syntrophomonas wolfei subsp. wolfei (strain DSM 2245B / Goettingen)).